The following is a 33-amino-acid chain: Photosystem II reaction center protein Psb30 (33 aa).

A helical transmembrane segment spans residues 5–25; it reads LIAQLTFLTSIIVSGPLVIAL.

This sequence belongs to the Psb30/Ycf12 family. PSII is composed of 1 copy each of membrane proteins PsbA, PsbB, PsbC, PsbD, PsbE, PsbF, PsbH, PsbI, PsbJ, PsbK, PsbL, PsbM, PsbT, PsbX, PsbY, PsbZ, Psb30/Ycf12, peripheral proteins of the oxygen-evolving complex and a large number of cofactors. It forms dimeric complexes.

It is found in the plastid. The protein resides in the chloroplast thylakoid membrane. Functionally, a core subunit of photosystem II (PSII), probably helps stabilize the reaction center. This chain is Photosystem II reaction center protein Psb30, found in Psilotum nudum (Whisk fern).